A 491-amino-acid chain; its full sequence is Putative F-box/LRR-repeat protein At3g59230 (491 aa).

One can recognise an F-box domain in the interval K11–D57. LRR repeat units lie at residues L127–A154, N156–S182, E184–D209, A325–S351, N352–G377, N419–Y444, and V472–I491.

The polypeptide is Putative F-box/LRR-repeat protein At3g59230 (Arabidopsis thaliana (Mouse-ear cress)).